Consider the following 324-residue polypeptide: Membrane protein UL8 (324 aa).

An immunoglobulin V-like domain region spans residues 36–138 (ILESIIYVSG…LWYNLTVKPK (103 aa)). The chain crosses the membrane as a helical span at residues 278 to 298 (THYSWMLIIAIILIIFIIICL).

It belongs to the RL11 family. Highly glycosylated.

The protein resides in the host cell membrane. Plays a role in the inhibition of pro-inflammatory cytokine production. This effect is mediated by the conserved Ig-like domain. The chain is Membrane protein UL8 (UL8) from Homo sapiens (Human).